The following is a 200-amino-acid chain: Glycerol-3-phosphate acyltransferase (200 aa).

5 helical membrane-spanning segments follow: residues 3–23 (YIYS…FFIA), 50–70 (FYGA…VFLV), 75–95 (IKFM…SIFL), 109–129 (VFLA…LFIV), and 134–154 (YVSL…FFAG).

This sequence belongs to the PlsY family. As to quaternary structure, probably interacts with PlsX.

Its subcellular location is the cell inner membrane. It catalyses the reaction an acyl phosphate + sn-glycerol 3-phosphate = a 1-acyl-sn-glycero-3-phosphate + phosphate. Its pathway is lipid metabolism; phospholipid metabolism. Its function is as follows. Catalyzes the transfer of an acyl group from acyl-phosphate (acyl-PO(4)) to glycerol-3-phosphate (G3P) to form lysophosphatidic acid (LPA). This enzyme utilizes acyl-phosphate as fatty acyl donor, but not acyl-CoA or acyl-ACP. This is Glycerol-3-phosphate acyltransferase from Thermosipho melanesiensis (strain DSM 12029 / CIP 104789 / BI429).